The chain runs to 361 residues: Geranylgeranyl pyrophosphate synthase 3 (361 aa).

The tract at residues 44-63 (DSNGSKELAPNGAQSRVQKP) is disordered. Residues Lys-81, Arg-84, and His-113 each coordinate isopentenyl diphosphate. Mg(2+) contacts are provided by Asp-120 and Asp-124. Arg-129 contacts dimethylallyl diphosphate. Arg-130 is an isopentenyl diphosphate binding site. Positions 207, 208, and 244 each coordinate dimethylallyl diphosphate. Asp-247 serves as a coordination point for Mg(2+). 3 residues coordinate dimethylallyl diphosphate: Asn-251, Lys-261, and Lys-271.

This sequence belongs to the FPP/GGPP synthase family. The cofactor is Mg(2+).

The enzyme catalyses isopentenyl diphosphate + dimethylallyl diphosphate = (2E)-geranyl diphosphate + diphosphate. It carries out the reaction isopentenyl diphosphate + (2E)-geranyl diphosphate = (2E,6E)-farnesyl diphosphate + diphosphate. The catalysed reaction is isopentenyl diphosphate + (2E,6E)-farnesyl diphosphate = (2E,6E,10E)-geranylgeranyl diphosphate + diphosphate. Functionally, geranylgeranyl pyrophosphate synthase; part of the gene cluster 25 that mediates the biosynthesis of an isoprenoid secondary metabolite. In Zymoseptoria tritici (strain CBS 115943 / IPO323) (Speckled leaf blotch fungus), this protein is Geranylgeranyl pyrophosphate synthase 3 (GGS3).